A 359-amino-acid chain; its full sequence is (2E,6E)-farnesyl diphosphate synthase (359 aa).

The disordered stretch occupies residues 1–21; sequence MRGTDEKYGLPPQPDSDRMTR. The isopentenyl diphosphate site is built by lysine 73, arginine 76, and histidine 105. Residues aspartate 112 and aspartate 116 each contribute to the Mg(2+) site. The DDXXD motif motif lies at 112–116; that stretch reads DDLMD. Position 121 (arginine 121) interacts with (2E)-geranyl diphosphate. Arginine 122 contacts isopentenyl diphosphate. Lysine 201, threonine 202, and glutamine 239 together coordinate (2E)-geranyl diphosphate. Positions 242 to 246 match the DDXXD motif motif; the sequence is DDLLG. Residues lysine 256 and lysine 266 each contribute to the (2E)-geranyl diphosphate site.

The protein belongs to the FPP/GGPP synthase family. Mg(2+) serves as cofactor.

Its subcellular location is the cytoplasm. It carries out the reaction isopentenyl diphosphate + (2E)-geranyl diphosphate = (2E,6E)-farnesyl diphosphate + diphosphate. The protein operates within isoprenoid biosynthesis; farnesyl diphosphate biosynthesis; farnesyl diphosphate from geranyl diphosphate and isopentenyl diphosphate. Catalyzes the condensation of isopentenyl pyrophosphate (IPP) with geranyl diphosphate (GPP) to yield (2E,6E)-farnesyl diphosphate (E,E-FPP). May be used for squalene and possibly sterol biosynthesis. The sequence is that of (2E,6E)-farnesyl diphosphate synthase from Mycobacterium bovis (strain ATCC BAA-935 / AF2122/97).